Consider the following 173-residue polypeptide: Glutamyl-tRNA(Gln) amidotransferase subunit F, mitochondrial (173 aa).

The transit peptide at 1-15 (MSRFMIRAVFFRRYT) directs the protein to the mitochondrion.

The protein belongs to the GatF family. Subunit of the heterotrimeric GatFAB amidotransferase (AdT) complex, composed of A, B and F subunits.

The protein resides in the mitochondrion inner membrane. It carries out the reaction L-glutamyl-tRNA(Gln) + L-glutamine + ATP + H2O = L-glutaminyl-tRNA(Gln) + L-glutamate + ADP + phosphate + H(+). Allows the formation of correctly charged Gln-tRNA(Gln) through the transamidation of misacylated Glu-tRNA(Gln) in the mitochondria. The reaction takes place in the presence of glutamine and ATP through an activated gamma-phospho-Glu-tRNA(Gln). Required for proper protein synthesis within the mitochondrion. In Candida glabrata (strain ATCC 2001 / BCRC 20586 / JCM 3761 / NBRC 0622 / NRRL Y-65 / CBS 138) (Yeast), this protein is Glutamyl-tRNA(Gln) amidotransferase subunit F, mitochondrial.